The chain runs to 427 residues: Dihydroorotase (427 aa).

Zn(2+) contacts are provided by His-60 and His-62. Residues 62–64 (HFR) and Asn-94 each bind substrate. 3 residues coordinate Zn(2+): Asp-152, His-179, and His-232. A substrate-binding site is contributed by Asn-278. Asp-305 provides a ligand contact to Zn(2+). The active site involves Asp-305. Residues His-309 and 323–324 (FG) each bind substrate.

Belongs to the metallo-dependent hydrolases superfamily. DHOase family. Class I DHOase subfamily. The cofactor is Zn(2+).

It carries out the reaction (S)-dihydroorotate + H2O = N-carbamoyl-L-aspartate + H(+). It participates in pyrimidine metabolism; UMP biosynthesis via de novo pathway; (S)-dihydroorotate from bicarbonate: step 3/3. In terms of biological role, catalyzes the reversible cyclization of carbamoyl aspartate to dihydroorotate. The chain is Dihydroorotase from Enterococcus faecalis (strain ATCC 700802 / V583).